The chain runs to 339 residues: Glycerol-3-phosphate dehydrogenase [NAD(P)+] (339 aa).

Serine 14, tyrosine 15, histidine 35, and lysine 109 together coordinate NADPH. 3 residues coordinate sn-glycerol 3-phosphate: lysine 109, glycine 138, and threonine 140. Alanine 142 contacts NADPH. Sn-glycerol 3-phosphate is bound by residues lysine 194, aspartate 247, serine 257, arginine 258, and asparagine 259. The Proton acceptor role is filled by lysine 194. NADPH is bound at residue arginine 258. NADPH-binding residues include valine 282 and glutamate 284.

This sequence belongs to the NAD-dependent glycerol-3-phosphate dehydrogenase family.

Its subcellular location is the cytoplasm. It catalyses the reaction sn-glycerol 3-phosphate + NAD(+) = dihydroxyacetone phosphate + NADH + H(+). It carries out the reaction sn-glycerol 3-phosphate + NADP(+) = dihydroxyacetone phosphate + NADPH + H(+). Its pathway is membrane lipid metabolism; glycerophospholipid metabolism. In terms of biological role, catalyzes the reduction of the glycolytic intermediate dihydroxyacetone phosphate (DHAP) to sn-glycerol 3-phosphate (G3P), the key precursor for phospholipid synthesis. The chain is Glycerol-3-phosphate dehydrogenase [NAD(P)+] from Shewanella amazonensis (strain ATCC BAA-1098 / SB2B).